A 159-amino-acid chain; its full sequence is ATP synthase subunit b (159 aa).

A helical membrane pass occupies residues 2–22 (NISIPQIIAAILNFIILLLIV).

This sequence belongs to the ATPase B chain family. In terms of assembly, F-type ATPases have 2 components, F(1) - the catalytic core - and F(0) - the membrane proton channel. F(1) has five subunits: alpha(3), beta(3), gamma(1), delta(1), epsilon(1). F(0) has three main subunits: a(1), b(2) and c(10-14). The alpha and beta chains form an alternating ring which encloses part of the gamma chain. F(1) is attached to F(0) by a central stalk formed by the gamma and epsilon chains, while a peripheral stalk is formed by the delta and b chains.

It localises to the cell membrane. Functionally, f(1)F(0) ATP synthase produces ATP from ADP in the presence of a proton or sodium gradient. F-type ATPases consist of two structural domains, F(1) containing the extramembraneous catalytic core and F(0) containing the membrane proton channel, linked together by a central stalk and a peripheral stalk. During catalysis, ATP synthesis in the catalytic domain of F(1) is coupled via a rotary mechanism of the central stalk subunits to proton translocation. Its function is as follows. Component of the F(0) channel, it forms part of the peripheral stalk, linking F(1) to F(0). This chain is ATP synthase subunit b, found in Clostridium botulinum (strain Loch Maree / Type A3).